The primary structure comprises 195 residues: Putative NADH dehydrogenase/NAD(P)H nitroreductase CC_0061 (195 aa).

Belongs to the nitroreductase family. HadB/RutE subfamily. The cofactor is FMN.

The polypeptide is Putative NADH dehydrogenase/NAD(P)H nitroreductase CC_0061 (Caulobacter vibrioides (strain ATCC 19089 / CIP 103742 / CB 15) (Caulobacter crescentus)).